A 201-amino-acid chain; its full sequence is Thymidine kinase (201 aa).

Residues 9 to 16 and 87 to 90 contribute to the ATP site; these read SAMNAGKS and DECH. Glu88 (proton acceptor) is an active-site residue. Residues Cys145, Cys147, Cys182, and His185 each contribute to the Zn(2+) site.

Belongs to the thymidine kinase family. Homotetramer.

It is found in the cytoplasm. The catalysed reaction is thymidine + ATP = dTMP + ADP + H(+). In Photorhabdus laumondii subsp. laumondii (strain DSM 15139 / CIP 105565 / TT01) (Photorhabdus luminescens subsp. laumondii), this protein is Thymidine kinase.